Reading from the N-terminus, the 1574-residue chain is Centrosomal protein of 170 kDa protein B (1574 aa).

The 51-residue stretch at 23-73 (IFVGRDECELMLQSRSVDKQHAVINYDQDRDEHWVKDLGSLNGTFVNDVRI) folds into the FHA domain. Disordered stretches follow at residues 121–258 (VSVK…GVGG), 316–395 (DWLV…RDPQ), and 409–578 (FDGD…QDQE). Basic and acidic residues-rich tracts occupy residues 147–157 (RPEKGDRRHGA), 182–197 (SEDRHQEEPYSERPKD), and 325–344 (LLRRDGPGDDRHSTKSDLPV). Ser-360 is subject to Phosphoserine. Residues 370–382 (ASVSGASAEASGE) show a composition bias toward low complexity. Ser-421 is subject to Phosphoserine. Basic and acidic residues predominate over residues 430–446 (PKADKRRGPGTSDRDRP). The segment covering 452–463 (ATGSSSGPQRAS) has biased composition (polar residues). The segment covering 465–474 (LKREKTEERL) has biased composition (basic and acidic residues). The segment covering 475 to 488 (GNTSPVPRASTRSF) has biased composition (polar residues). Phosphoserine is present on residues Ser-478 and Ser-490. Over residues 518 to 528 (EKTPPVLPAPL) the composition is skewed to pro residues. Residue Ser-534 is modified to Phosphoserine. A phosphothreonine mark is found at Thr-540 and Thr-541. 10 positions are modified to phosphoserine: Ser-595, Ser-617, Ser-653, Ser-709, Ser-744, Ser-746, Ser-749, Ser-751, Ser-819, and Ser-843. 6 disordered regions span residues 637–826 (PGMA…RDGL), 839–882 (RSGR…HISS), 924–1300 (SKSA…DPYG), 1333–1358 (AGDGDSLGSPGPTRSPSLGNVPNTPA), 1377–1407 (NFQKVPPGSMNSHNLDQNMNDSRDDALTNKT), and 1510–1535 (NRAPSGSGQPGLGKARPAAQSSTSPA). The span at 857–867 (FARQESFTKEP) shows a compositional bias: polar residues. The residue at position 947 (Ser-947) is a Phosphoserine. Over residues 950-959 (DTASTISLLS) the composition is skewed to polar residues. Ser-965 and Ser-981 each carry phosphoserine. Positions 996-1005 (ARERMSERQH) are enriched in basic and acidic residues. Over residues 1084 to 1102 (RSSATAQKVQQALTRSNSL) the composition is skewed to polar residues. Ser-1122 carries the post-translational modification Phosphoserine. The span at 1134–1146 (AANPEPANRAAPE) shows a compositional bias: low complexity. A phosphoserine mark is found at Ser-1166 and Ser-1186. Residues 1199–1213 (AEARAAAKKAAATAA) are compositionally biased toward low complexity. A compositionally biased stretch (polar residues) spans 1265–1282 (HASTATQTPRGSSSTRAR). Thr-1289 carries the phosphothreonine modification. At Ser-1341 the chain carries Phosphoserine. Polar residues-rich tracts occupy residues 1344-1358 (PTRSPSLGNVPNTPA) and 1385-1396 (SMNSHNLDQNMN). At Thr-1345 the chain carries Phosphothreonine. Ser-1347 is modified (phosphoserine). Residues Ser-1530 and Ser-1533 each carry the phosphoserine modification.

The protein belongs to the CEP170 family.

It localises to the cytoplasm. It is found in the cytoskeleton. Plays a role in microtubule organization. This is Centrosomal protein of 170 kDa protein B (Cep170b) from Mus musculus (Mouse).